Consider the following 228-residue polypeptide: Adapter protein MecA (228 aa).

Belongs to the MecA family. In terms of assembly, homodimer.

Enables the recognition and targeting of unfolded and aggregated proteins to the ClpC protease or to other proteins involved in proteolysis. The protein is Adapter protein MecA of Lacticaseibacillus paracasei (strain ATCC 334 / BCRC 17002 / CCUG 31169 / CIP 107868 / KCTC 3260 / NRRL B-441) (Lactobacillus paracasei).